Here is a 135-residue protein sequence, read N- to C-terminus: CTP pyrophosphohydrolase (135 aa).

The Nudix hydrolase domain maps to 2-127 (KMIEVVAAII…DIPLLEAFMA (126 aa)). Substrate is bound by residues 34–39 (FAGGKV), arginine 72, and aspartate 118. Positions 37-58 (GKVEPDESQRQALVRELREELG) match the Nudix box motif.

It belongs to the Nudix hydrolase family. Monomer. Mg(2+) serves as cofactor. Mn(2+) is required as a cofactor.

It carries out the reaction CTP + H2O = CMP + diphosphate + H(+). It catalyses the reaction dCTP + H2O = dCMP + diphosphate + H(+). Its function is as follows. Hydrolase with a preference for pyrimidine substrates. Has high activity with 5-methyl-dCTP, and much lower activity with CTP, dCTP, 5-hydroxy-dCTP, 2-hydroxy-dATP and 8-hydroxy-dGTP. This Escherichia coli (strain K12) protein is CTP pyrophosphohydrolase (nudG).